A 360-amino-acid polypeptide reads, in one-letter code: Phenylalanine--tRNA ligase alpha subunit (360 aa).

Glutamate 260 lines the Mg(2+) pocket.

It belongs to the class-II aminoacyl-tRNA synthetase family. Phe-tRNA synthetase alpha subunit type 1 subfamily. As to quaternary structure, tetramer of two alpha and two beta subunits. Mg(2+) serves as cofactor.

It is found in the cytoplasm. The enzyme catalyses tRNA(Phe) + L-phenylalanine + ATP = L-phenylalanyl-tRNA(Phe) + AMP + diphosphate + H(+). The sequence is that of Phenylalanine--tRNA ligase alpha subunit from Rhodopseudomonas palustris (strain ATCC BAA-98 / CGA009).